The chain runs to 264 residues: MASKYQSVQPGGSLIIAWRAQGKKVLIVGGGVVAAGRILHVLNADAHVIVVSPKAGLCKEVAWRIQEKQVEWRDRGFLVEDLSDDVNMVLTAIDDPSLSSEIYKLCKSKKIPVNAADIPPECDFYFGSEIRNGPLQIMVSTNGKGPKLASLIRKKIESSINPATGMALEKTGLLRQKLRDIVPEPENSRKRMRWMIEICELWSLEELAMLDENLINRLLGYFPKKTPSYREITTPAYSKIDNYIWFGAIIISGAVLLKHVSKAR.

Residues 32–33 (VV) and 53–56 (PKAG) each bind NAD(+). Asp-117 functions as the Proton acceptor in the catalytic mechanism.

The protein belongs to the precorrin-2 dehydrogenase / sirohydrochlorin ferrochelatase family. MET8 subfamily.

Its subcellular location is the cytoplasm. It is found in the nucleus. The enzyme catalyses precorrin-2 + NAD(+) = sirohydrochlorin + NADH + 2 H(+). The catalysed reaction is siroheme + 2 H(+) = sirohydrochlorin + Fe(2+). Its pathway is porphyrin-containing compound metabolism; siroheme biosynthesis; siroheme from sirohydrochlorin: step 1/1. It participates in porphyrin-containing compound metabolism; siroheme biosynthesis; sirohydrochlorin from precorrin-2: step 1/1. Its function is as follows. Catalyzes the conversion of precorrin-2 into siroheme. This reaction consist of the NAD-dependent oxidation of precorrin-2 into sirohydrochlorin and its subsequent ferrochelation into siroheme. In Schizosaccharomyces pombe (strain 972 / ATCC 24843) (Fission yeast), this protein is Siroheme biosynthesis protein met8 (met8).